A 158-amino-acid polypeptide reads, in one-letter code: 3-hydroxyacyl-[acyl-carrier-protein] dehydratase FabZ (158 aa).

His60 is a catalytic residue.

Belongs to the thioester dehydratase family. FabZ subfamily.

The protein localises to the cytoplasm. It carries out the reaction a (3R)-hydroxyacyl-[ACP] = a (2E)-enoyl-[ACP] + H2O. Functionally, involved in unsaturated fatty acids biosynthesis. Catalyzes the dehydration of short chain beta-hydroxyacyl-ACPs and long chain saturated and unsaturated beta-hydroxyacyl-ACPs. In Zymomonas mobilis subsp. mobilis (strain ATCC 31821 / ZM4 / CP4), this protein is 3-hydroxyacyl-[acyl-carrier-protein] dehydratase FabZ.